The sequence spans 384 residues: GTPase Obg (384 aa).

One can recognise an Obg domain in the interval 1–159 (MKFIDEAKIE…RSLQLELKVL (159 aa)). The segment at 20-46 (ATSFRREKFVPRGGPDGGDGGKGGSVW) is disordered. Residues 33–43 (GPDGGDGGKGG) are compositionally biased toward gly residues. An OBG-type G domain is found at 160–348 (ADVGLLGMPN…LVHQINQYLT (189 aa)). GTP contacts are provided by residues 166–173 (GMPNAGKS), 191–195 (FTTLH), 213–216 (DIPG), 284–287 (NKLD), and 329–331 (SAL). Mg(2+)-binding residues include Ser173 and Thr193.

Belongs to the TRAFAC class OBG-HflX-like GTPase superfamily. OBG GTPase family. Monomer. Requires Mg(2+) as cofactor.

The protein localises to the cytoplasm. An essential GTPase which binds GTP, GDP and possibly (p)ppGpp with moderate affinity, with high nucleotide exchange rates and a fairly low GTP hydrolysis rate. Plays a role in control of the cell cycle, stress response, ribosome biogenesis and in those bacteria that undergo differentiation, in morphogenesis control. The sequence is that of GTPase Obg from Neisseria meningitidis serogroup C (strain 053442).